The chain runs to 476 residues: Bifunctional protein GlmU (476 aa).

Positions 1-232 (MGDLAAIILA…PVEVMGVNDR (232 aa)) are pyrophosphorylase. UDP-N-acetyl-alpha-D-glucosamine contacts are provided by residues 9–12 (LAAG), Lys-23, Gln-75, and 80–81 (GT). Residue Asp-105 coordinates Mg(2+). Residues Gly-142, Glu-157, Asn-172, and Asn-230 each coordinate UDP-N-acetyl-alpha-D-glucosamine. Asn-230 provides a ligand contact to Mg(2+). Residues 233-253 (AQLAEAGRFARQRINRELMLD) are linker. Positions 254–476 (GVTIVDPAAT…DGWKLKQRDQ (223 aa)) are N-acetyltransferase. Residues Arg-353 and Lys-371 each coordinate UDP-N-acetyl-alpha-D-glucosamine. Residue His-383 is the Proton acceptor of the active site. Tyr-386 and Asn-397 together coordinate UDP-N-acetyl-alpha-D-glucosamine. Acetyl-CoA contacts are provided by residues 406–407 (NY), Ser-425, Ala-443, and Arg-460.

In the N-terminal section; belongs to the N-acetylglucosamine-1-phosphate uridyltransferase family. It in the C-terminal section; belongs to the transferase hexapeptide repeat family. In terms of assembly, homotrimer. Requires Mg(2+) as cofactor.

It localises to the cytoplasm. It carries out the reaction alpha-D-glucosamine 1-phosphate + acetyl-CoA = N-acetyl-alpha-D-glucosamine 1-phosphate + CoA + H(+). The catalysed reaction is N-acetyl-alpha-D-glucosamine 1-phosphate + UTP + H(+) = UDP-N-acetyl-alpha-D-glucosamine + diphosphate. It participates in nucleotide-sugar biosynthesis; UDP-N-acetyl-alpha-D-glucosamine biosynthesis; N-acetyl-alpha-D-glucosamine 1-phosphate from alpha-D-glucosamine 6-phosphate (route II): step 2/2. It functions in the pathway nucleotide-sugar biosynthesis; UDP-N-acetyl-alpha-D-glucosamine biosynthesis; UDP-N-acetyl-alpha-D-glucosamine from N-acetyl-alpha-D-glucosamine 1-phosphate: step 1/1. Its pathway is bacterial outer membrane biogenesis; LPS lipid A biosynthesis. Functionally, catalyzes the last two sequential reactions in the de novo biosynthetic pathway for UDP-N-acetylglucosamine (UDP-GlcNAc). The C-terminal domain catalyzes the transfer of acetyl group from acetyl coenzyme A to glucosamine-1-phosphate (GlcN-1-P) to produce N-acetylglucosamine-1-phosphate (GlcNAc-1-P), which is converted into UDP-GlcNAc by the transfer of uridine 5-monophosphate (from uridine 5-triphosphate), a reaction catalyzed by the N-terminal domain. In Geobacter metallireducens (strain ATCC 53774 / DSM 7210 / GS-15), this protein is Bifunctional protein GlmU.